Consider the following 124-residue polypeptide: Large ribosomal subunit protein bL20 (124 aa).

It belongs to the bacterial ribosomal protein bL20 family.

Functionally, binds directly to 23S ribosomal RNA and is necessary for the in vitro assembly process of the 50S ribosomal subunit. It is not involved in the protein synthesizing functions of that subunit. In Gemmatimonas aurantiaca (strain DSM 14586 / JCM 11422 / NBRC 100505 / T-27), this protein is Large ribosomal subunit protein bL20.